We begin with the raw amino-acid sequence, 105 residues long: Cuticle protein AMP2 (105 aa).

Residues 1–21 form a disordered region; the sequence is DRDAQTLTDERSDQGDGNFRY. Positions 16–81 constitute a Chitin-binding type R&amp;R domain; it reads DGNFRYEFET…PSSDLLPVGP (66 aa).

In terms of tissue distribution, arthrodial membrane.

This is Cuticle protein AMP2 from Homarus americanus (American lobster).